A 203-amino-acid chain; its full sequence is Alpha-amylase/subtilisin inhibitor (203 aa).

Positions 1–12 (MGSRRAGSSSSP) are enriched in polar residues. Positions 1-22 (MGSRRAGSSSSPLFWPAPPSRA) are cleaved as a signal peptide. Positions 1 to 34 (MGSRRAGSSSSPLFWPAPPSRAADPPPVHDTDGH) are disordered. Residues 15–26 (WPAPPSRAADPP) are compositionally biased toward pro residues. Disulfide bonds link Cys65-Cys112 and Cys166-Cys170.

This sequence belongs to the protease inhibitor I3 (leguminous Kunitz-type inhibitor) family.

Functionally, this protein inhibits independently subtilisin and alpha-amylase. The chain is Alpha-amylase/subtilisin inhibitor from Hordeum vulgare (Barley).